We begin with the raw amino-acid sequence, 166 residues long: Large ribosomal subunit protein uL10 (166 aa).

This sequence belongs to the universal ribosomal protein uL10 family. Part of the ribosomal stalk of the 50S ribosomal subunit. The N-terminus interacts with L11 and the large rRNA to form the base of the stalk. The C-terminus forms an elongated spine to which L12 dimers bind in a sequential fashion forming a multimeric L10(L12)X complex.

Its function is as follows. Forms part of the ribosomal stalk, playing a central role in the interaction of the ribosome with GTP-bound translation factors. This is Large ribosomal subunit protein uL10 from Streptococcus uberis (strain ATCC BAA-854 / 0140J).